We begin with the raw amino-acid sequence, 473 residues long: Photosystem II CP43 reaction center protein (473 aa).

Positions 1–14 (MKTLYSLRRFYPVE) are excised as a propeptide. Thr-15 carries the N-acetylthreonine modification. At Thr-15 the chain carries Phosphothreonine. A run of 5 helical transmembrane segments spans residues 69-93 (LFEV…PHLA), 134-155 (LLGP…KDRN), 178-200 (KALY…RKIT), 255-275 (KPFA…LSYS), and 291-312 (WFNN…ASQA). Glu-367 is a [CaMn4O5] cluster binding site. The helical transmembrane segment at 447-471 (RARAAAAGFEKGIDRDFEPVLSMTP) threads the bilayer.

Belongs to the PsbB/PsbC family. PsbC subfamily. PSII is composed of 1 copy each of membrane proteins PsbA, PsbB, PsbC, PsbD, PsbE, PsbF, PsbH, PsbI, PsbJ, PsbK, PsbL, PsbM, PsbT, PsbX, PsbY, PsbZ, Psb30/Ycf12, at least 3 peripheral proteins of the oxygen-evolving complex and a large number of cofactors. It forms dimeric complexes. Requires Binds multiple chlorophylls and provides some of the ligands for the Ca-4Mn-5O cluster of the oxygen-evolving complex. It may also provide a ligand for a Cl- that is required for oxygen evolution. PSII binds additional chlorophylls, carotenoids and specific lipids. as cofactor.

It localises to the plastid. It is found in the chloroplast thylakoid membrane. In terms of biological role, one of the components of the core complex of photosystem II (PSII). It binds chlorophyll and helps catalyze the primary light-induced photochemical processes of PSII. PSII is a light-driven water:plastoquinone oxidoreductase, using light energy to abstract electrons from H(2)O, generating O(2) and a proton gradient subsequently used for ATP formation. This Gossypium hirsutum (Upland cotton) protein is Photosystem II CP43 reaction center protein.